The sequence spans 159 residues: Transcriptional repressor NrdR (159 aa).

Residues 1–11 (MQCPTCQNTDS) are compositionally biased toward polar residues. Residues 1–21 (MQCPTCQNTDSRVLESRSADS) form a disordered region. The segment at 3 to 34 (CPTCQNTDSRVLESRSADSGKSVRRRRECLNC) is a zinc-finger region. The region spanning 49–139 (VSVLKKDGSR…VYRKFNGVKD (91 aa)) is the ATP-cone domain.

Belongs to the NrdR family. Requires Zn(2+) as cofactor.

Its function is as follows. Negatively regulates transcription of bacterial ribonucleotide reductase nrd genes and operons by binding to NrdR-boxes. The chain is Transcriptional repressor NrdR from Prochlorococcus marinus (strain MIT 9301).